A 282-amino-acid chain; its full sequence is Small ribosomal subunit protein uS2 (282 aa).

The tract at residues 245–266 is disordered; it reads AEEAVEELPLPTGEAQDEASSK.

Belongs to the universal ribosomal protein uS2 family.

In Chlamydia trachomatis serovar D (strain ATCC VR-885 / DSM 19411 / UW-3/Cx), this protein is Small ribosomal subunit protein uS2 (rpsB).